A 332-amino-acid polypeptide reads, in one-letter code: CRISPR-associated endonuclease Cas1 3 (332 aa).

Mn(2+) contacts are provided by Glu159, His224, and Glu239.

The protein belongs to the CRISPR-associated endonuclease Cas1 family. As to quaternary structure, homodimer, forms a heterotetramer with a Cas2 homodimer. Mg(2+) is required as a cofactor. It depends on Mn(2+) as a cofactor.

Its function is as follows. CRISPR (clustered regularly interspaced short palindromic repeat), is an adaptive immune system that provides protection against mobile genetic elements (viruses, transposable elements and conjugative plasmids). CRISPR clusters contain spacers, sequences complementary to antecedent mobile elements, and target invading nucleic acids. CRISPR clusters are transcribed and processed into CRISPR RNA (crRNA). Acts as a dsDNA endonuclease. Involved in the integration of spacer DNA into the CRISPR cassette. In Thermus thermophilus (strain ATCC 27634 / DSM 579 / HB8), this protein is CRISPR-associated endonuclease Cas1 3.